Consider the following 256-residue polypeptide: uncharacterized protein (256 aa).

A signal peptide spans M1–G24. C25 carries the N-palmitoyl cysteine lipid modification. A lipid anchor (S-diacylglycerol cysteine) is attached at C25.

The protein belongs to the staphylococcal tandem lipoprotein family.

Its subcellular location is the cell membrane. This is an uncharacterized protein from Staphylococcus aureus (strain Mu50 / ATCC 700699).